The chain runs to 178 residues: Mediator of RNA polymerase II transcription subunit 28 (178 aa).

The tract at residues 1–44 (MAAPLGGMFSGQPPGPPQAPPGLPGQASLLQAAPGAPRPSSSTL) is disordered. The segment covering 13-23 (PPGPPQAPPGL) has biased composition (pro residues). Residues 109–145 (QVIKEDVSELRNELQRKDALVQKHLTKLRHWQQVLED) adopt a coiled-coil conformation.

The protein belongs to the Mediator complex subunit 28 family. As to quaternary structure, component of the Mediator complex, which is composed of MED1, MED4, MED6, MED7, MED8, MED9, MED10, MED11, MED12, MED13, MED13L, MED14, MED15, MED16, MED17, MED18, MED19, MED20, MED21, MED22, MED23, MED24, MED25, MED26, MED27, MED29, MED30, MED31, CCNC, CDK8 and CDC2L6/CDK11. The MED12, MED13, CCNC and CDK8 subunits form a distinct module termed the CDK8 module. Mediator containing the CDK8 module is less active than Mediator lacking this module in supporting transcriptional activation. Individual preparations of the Mediator complex lacking one or more distinct subunits have been variously termed ARC, CRSP, DRIP, PC2, SMCC and TRAP. Forms a ternary complex with NF2/merlin and GRB2. Binds to actin. Widely expressed. Highly expressed in vascular tissues such as placenta, testis and liver.

The protein resides in the nucleus. It localises to the cytoplasm. It is found in the membrane. In terms of biological role, component of the Mediator complex, a coactivator involved in the regulated transcription of nearly all RNA polymerase II-dependent genes. Mediator functions as a bridge to convey information from gene-specific regulatory proteins to the basal RNA polymerase II transcription machinery. Mediator is recruited to promoters by direct interactions with regulatory proteins and serves as a scaffold for the assembly of a functional preinitiation complex with RNA polymerase II and the general transcription factors. May be part of a complex containing NF2/merlin that participates in cellular signaling to the actin cytoskeleton downstream of tyrosine kinase signaling pathways. This chain is Mediator of RNA polymerase II transcription subunit 28 (MED28), found in Homo sapiens (Human).